The primary structure comprises 114 residues: Flagellar hook-basal body complex protein FliE (114 aa).

The protein belongs to the FliE family.

The protein resides in the bacterial flagellum basal body. This Burkholderia vietnamiensis (strain G4 / LMG 22486) (Burkholderia cepacia (strain R1808)) protein is Flagellar hook-basal body complex protein FliE.